The chain runs to 260 residues: Repetitive secreted protein 1 (260 aa).

Residues 1–20 (MKLSFTIVATAALVASCTFA) form the signal peptide.

Rsp1 is processed by the subtilisin-like endoprotease kex2. Cleavage by kex2 generates 11 peptides.

It is found in the secreted. In terms of biological role, repetitive secreted protein essential for pathogenic development. Hum3 and rsp1 together are pathogenicity proteins that share an essential function in early stages of the infection. The sequence is that of Repetitive secreted protein 1 from Mycosarcoma maydis (Corn smut fungus).